The sequence spans 224 residues: Toxin coregulated pilin (224 aa).

Residues 1–25 constitute a propeptide, atypical leader sequence; it reads MQLLKQLFKKKFVKEEHDKKTGQEG. Position 26 is an N-methylmethionine (Met-26). Residues 26–46 traverse the membrane as a helical segment; that stretch reads MTLLEVIIVLGIMGVVSAGVV. Cys-145 and Cys-211 are disulfide-bonded.

The protein localises to the fimbrium. It localises to the membrane. Major component of the toxin co-regulated pilus (tcp) which is a type IV pilus essential for bacterial aggregation and subsequent colonization in the host small intestine. The sequence is that of Toxin coregulated pilin (tcpA) from Vibrio cholerae.